The sequence spans 3411 residues: Genome polyprotein (3411 aa).

At 1-104 (MSGRKAQGKT…LSSRKRRSHD (104 aa)) the chain is on the cytoplasmic side. Residues 102 to 121 (SHDALAVQFLILGMLLMAGG) constitute a propeptide, ER anchor for the capsid protein C, removed in mature form by serine protease NS3. Residues 105 to 125 (ALAVQFLILGMLLMAGGVTLV) form a helical membrane-spanning segment. At 126–244 (RKNRWLLLNV…GERQLQKIER (119 aa)) the chain is on the extracellular side. N-linked (GlcNAc...) asparagine; by host glycosylation is found at Asn134 and Asn150. A helical membrane pass occupies residues 245 to 265 (WLVRNPFFAVTALTIAYLVGS). Over 266-270 (NMTQR) the chain is Cytoplasmic. A helical membrane pass occupies residues 271 to 285 (VVIALLVLAVGPAYS). The Extracellular portion of the chain corresponds to 286-730 (AHCIGITDRD…TVFGSAFQGL (445 aa)). Intrachain disulfides connect Cys288/Cys315, Cys345/Cys401, Cys345/Cys406, Cys359/Cys390, Cys377/Cys401, Cys377/Cys406, Cys467/Cys568, and Cys585/Cys615. The fusion peptide stretch occupies residues 383–396 (DRGWGNGCGLFGKG). Residues 731–751 (FGGLSWITKVIMGAVLIWVGI) traverse the membrane as a helical segment. The Extracellular segment spans residues 752–757 (NTRNMT). The helical transmembrane segment at 758 to 778 (MSMSMILVGVIMMFLSLGVGA) threads the bilayer. Residues 779 to 1132 (DQGCAINFGK…LVRSWVTAGE (354 aa)) are Extracellular-facing. 6 cysteine pairs are disulfide-bonded: Cys782–Cys793, Cys833–Cys921, Cys957–Cys1002, Cys1058–Cys1107, Cys1069–Cys1091, and Cys1090–Cys1094. N-linked (GlcNAc...) asparagine; by host glycans are attached at residues Asn908 and Asn986. Residues 1133-1153 (IHAVPFGLVSMMIAMEVVLRK) traverse the membrane as a helical segment. Residues 1154–1201 (RQGPKQMLVGGVVLLGAMLVGQVTLLDLLKLTVAVGLHFHEMNNGGDA) are Cytoplasmic-facing. The helical transmembrane segment at 1202–1222 (MYMALIAAFSIRPGLLIGFGL) threads the bilayer. Over 1223 to 1287 (RTLWSPRERL…ILPLMALLTP (65 aa)) the chain is Lumenal. The chain crosses the membrane as a helical span at residues 1288–1308 (VTMAEVRLAAMLFCTVVIIGV). Over 1309–1355 (LHQNSKDTSMQKTIPLVALTLTSYLGLTQPFLGLCAFLATRLFGRRS) the chain is Cytoplasmic. Residues 1356–1376 (IPVNEALAAAGLVGVLAGLAF) form a helical membrane-spanning segment. The Lumenal portion of the chain corresponds to 1377–1378 (QE). A helical transmembrane segment spans residues 1379 to 1399 (MENFLGPIAVGGILMMLVSVA). At 1400–1456 (GRVDGLELRKLGEVSWEEEAEISGSSARYDVALSEQGEFKLLSEEKVPWDQVVMTSL) the chain is on the cytoplasmic side. The interacts with and activates NS3 protease stretch occupies residues 1407–1446 (LRKLGEVSWEEEAEISGSSARYDVALSEQGEFKLLSEEKV). The segment at residues 1457–1477 (ALVGAAIHPFALLLVLAGWLF) is an intramembrane region (helical). At 1478–2157 (HVKGARRSGD…RNALSMMPEA (680 aa)) the chain is on the cytoplasmic side. Residues 1485–1665 (SGDVLWDIPT…EVKEEGKEEL (181 aa)) form the Peptidase S7 domain. Catalysis depends on charge relay system; for serine protease NS3 activity residues His1537, Asp1561, and Ser1622. Residues 1669-1825 (PTMLKKGMTT…HSNGEIEDVQ (157 aa)) form the Helicase ATP-binding domain. The interval 1673-1676 (KKGM) is important for RNA-binding. Residue 1682-1689 (FHPGAGKT) coordinates ATP. Positions 1773–1776 (DEAH) match the DEAH box motif. One can recognise a Helicase C-terminal domain in the interval 1820-1997 (EIEDVQTDIP…VRGGMVAPLY (178 aa)). Lys1877 bears the N6-acetyllysine; by host mark. The interval 1942–1961 (AAQRRGRIGRNPNRDGDSYY) is disordered. Residues 2158-2178 (MTIAMLFILAGLLTSGMVIFF) form a helical membrane-spanning segment. The Lumenal segment spans residues 2179–2186 (MSPKGISR). An intramembrane region (helical) is located at residues 2187-2207 (MSMAMGTMAGCGYLMFLGGVK). The Lumenal segment spans residues 2208-2209 (PT). Residues 2210 to 2230 (HISYIMLIFFVLMVVVIPEPG) form a helical membrane-spanning segment. Topologically, residues 2231 to 2241 (QQRSIQDNQVA) are cytoplasmic. Residues 2242–2262 (YLIIGILTLVSVVAANELGML) form a helical membrane-spanning segment. Residues 2263 to 2293 (EKTKEDLFGKKDLIPSSASPWSWPDLDLKPG) lie on the Lumenal side of the membrane. The helical intramembrane region spans 2294 to 2314 (AAWTVYVGIVTMLSPMLHHWI). Over 2315–2360 (KVEYGNLSLSGIAQSASVLSFMDKGIPFMKMNISVIILLVSGWNSI) the chain is Lumenal. A helical membrane pass occupies residues 2361–2380 (TVMPLLCGIGCAMLHWSLIL). The Cytoplasmic segment spans residues 2381–2421 (PGIKAQQSKLAQRRVFHGVAKNPVVDGNPTVDIEEAPEMPA). Residues 2422–2442 (LYEKKLALYLLLALSLASVAM) traverse the membrane as a helical segment. The Lumenal segment spans residues 2443 to 2445 (CRT). A helical transmembrane segment spans residues 2446-2466 (PFSLAEGIVLASAALGPLIEG). Topologically, residues 2467–3411 (NTSLLWNGPM…DADLQPGELI (945 aa)) are cytoplasmic. The region spanning 2507–2771 (GRANGKTLGE…DVILPIGTRS (265 aa)) is the mRNA cap 0-1 NS5-type MT domain. Ser2562 lines the S-adenosyl-L-methionine pocket. At Ser2562 the chain carries Phosphoserine. Lys2567 acts as the For 2'-O-MTase activity in catalysis. Residues Gly2592, Trp2593, Thr2610, Leu2611, Asp2637, and Ile2638 each coordinate S-adenosyl-L-methionine. Catalysis depends on Asp2652, which acts as the For 2'-O-MTase activity. Ile2653 serves as a coordination point for S-adenosyl-L-methionine. Active-site for 2'-O-MTase activity residues include Lys2688 and Glu2724. An S-adenosyl-L-methionine-binding site is contributed by Tyr2726. Positions 2878–2911 (RKIMKVVNRWLFRHLAREKNPRLCTKEEFIAKVR) match the Nuclear localization signal motif. Positions 2945, 2949, 2954, and 2957 each coordinate Zn(2+). The RdRp catalytic domain occupies 3035–3187 (GGFYADDTAG…RPIDDRFGLA (153 aa)). Zn(2+) is bound by residues His3222, Cys3238, and Cys3357.

It in the N-terminal section; belongs to the class I-like SAM-binding methyltransferase superfamily. mRNA cap 0-1 NS5-type methyltransferase family. In terms of assembly, homodimer. Interacts (via N-terminus) with host EXOC1 (via C-terminus); this interaction results in EXOC1 degradation through the proteasome degradation pathway. Forms heterodimers with envelope protein E in the endoplasmic reticulum and Golgi. As to quaternary structure, homodimer; in the endoplasmic reticulum and Golgi. Interacts with protein prM. Interacts with non-structural protein 1. In terms of assembly, homodimer; Homohexamer when secreted. Interacts with envelope protein E. Interacts (via N-terminus) with serine protease NS3. As to quaternary structure, forms a heterodimer with serine protease NS3. May form homooligomers. In terms of assembly, forms a heterodimer with NS2B. Interacts with non-structural protein 2A (via N-terminus). Interacts with NS4B. Interacts with unphosphorylated RNA-directed RNA polymerase NS5; this interaction stimulates RNA-directed RNA polymerase NS5 guanylyltransferase activity. NS3 interacts with host PDCD6IP; this interaction contributes to virion release. Interacts with serine protease NS3. As to quaternary structure, homodimer. Interacts with host STAT2; this interaction prevents the establishment of cellular antiviral state. Interacts with serine protease NS3. Interacts with host TRIM23; this interaction leads to NS5 ubiquitination. Specific enzymatic cleavages in vivo yield mature proteins. The nascent capsid protein C contains a C-terminal hydrophobic domain that act as a signal sequence for translocation of prM into the lumen of the ER. Mature capsid protein C is cleaved at a site upstream of this hydrophobic domain by NS3. prM is cleaved in post-Golgi vesicles by a host furin, releasing the mature small envelope protein M, and peptide pr. Non-structural protein 2A-alpha, a C-terminally truncated form of non-structural protein 2A, results from partial cleavage by NS3. Specific enzymatic cleavages in vivo yield mature proteins peptide 2K acts as a signal sequence and is removed from the N-terminus of NS4B by the host signal peptidase in the ER lumen. Signal cleavage at the 2K-4B site requires a prior NS3 protease-mediated cleavage at the 4A-2K site. Post-translationally, cleaved in post-Golgi vesicles by a host furin, releasing the mature small envelope protein M, and peptide pr. This cleavage is incomplete as up to 30% of viral particles still carry uncleaved prM. In terms of processing, N-glycosylated. N-glycosylated. The excreted form is glycosylated and this is required for efficient secretion of the protein from infected cells. Post-translationally, polyubiquitinated; ubiquitination is probably mediated by host TRIM23 and is prerequisite for NS5-STAT2 interaction. NS5 is not ISGylated or sumoylated. In terms of processing, acetylated by host KAT5. Acetylation modulates NS3 RNA-binding and unwinding activities and plays an important positive role for viral replication. Phosphorylated on serines residues. This phosphorylation may trigger NS5 nuclear localization.

The protein resides in the virion. The protein localises to the host nucleus. Its subcellular location is the host cytoplasm. It localises to the host perinuclear region. It is found in the secreted. The protein resides in the virion membrane. The protein localises to the host endoplasmic reticulum membrane. It catalyses the reaction Selective hydrolysis of -Xaa-Xaa-|-Yaa- bonds in which each of the Xaa can be either Arg or Lys and Yaa can be either Ser or Ala.. The catalysed reaction is RNA(n) + a ribonucleoside 5'-triphosphate = RNA(n+1) + diphosphate. The enzyme catalyses a ribonucleoside 5'-triphosphate + H2O = a ribonucleoside 5'-diphosphate + phosphate + H(+). It carries out the reaction ATP + H2O = ADP + phosphate + H(+). It catalyses the reaction a 5'-end (5'-triphosphoguanosine)-ribonucleoside in mRNA + S-adenosyl-L-methionine = a 5'-end (N(7)-methyl 5'-triphosphoguanosine)-ribonucleoside in mRNA + S-adenosyl-L-homocysteine. The catalysed reaction is a 5'-end (N(7)-methyl 5'-triphosphoguanosine)-ribonucleoside in mRNA + S-adenosyl-L-methionine = a 5'-end (N(7)-methyl 5'-triphosphoguanosine)-(2'-O-methyl-ribonucleoside) in mRNA + S-adenosyl-L-homocysteine + H(+). Plays a role in virus budding by binding to the cell membrane and gathering the viral RNA into a nucleocapsid that forms the core of a mature virus particle. During virus entry, may induce genome penetration into the host cytoplasm after hemifusion induced by the surface proteins. Can migrate to the cell nucleus where it modulates host functions. In terms of biological role, inhibits RNA silencing by interfering with host Dicer. Functionally, prevents premature fusion activity of envelope proteins in trans-Golgi by binding to envelope protein E at pH6.0. After virion release in extracellular space, gets dissociated from E dimers. Its function is as follows. Acts as a chaperone for envelope protein E during intracellular virion assembly by masking and inactivating envelope protein E fusion peptide. prM is the only viral peptide matured by host furin in the trans-Golgi network probably to avoid catastrophic activation of the viral fusion activity in acidic Golgi compartment prior to virion release. prM-E cleavage is inefficient, and many virions are only partially matured. These uncleaved prM would play a role in immune evasion. May play a role in virus budding. Exerts cytotoxic effects by activating a mitochondrial apoptotic pathway through M ectodomain. May display a viroporin activity. In terms of biological role, binds to host cell surface receptor and mediates fusion between viral and cellular membranes. Envelope protein is synthesized in the endoplasmic reticulum in the form of heterodimer with protein prM. They play a role in virion budding in the ER, and the newly formed immature particle is covered with 60 spikes composed of heterodimer between precursor prM and envelope protein E. The virion is transported to the Golgi apparatus where the low pH causes dissociation of PrM-E heterodimers and formation of E homodimers. prM-E cleavage is inefficient, and many virions are only partially matured. These uncleaved prM would play a role in immune evasion. Functionally, involved in immune evasion, pathogenesis and viral replication. Once cleaved off the polyprotein, is targeted to three destinations: the viral replication cycle, the plasma membrane and the extracellular compartment. Essential for viral replication. Required for formation of the replication complex and recruitment of other non-structural proteins to the ER-derived membrane structures. Excreted as a hexameric lipoparticle that plays a role against host immune response. Antagonizing the complement function. Binds to the host macrophages and dendritic cells. Inhibits signal transduction originating from Toll-like receptor 3 (TLR3). Its function is as follows. Component of the viral RNA replication complex that functions in virion assembly and antagonizes the host immune response. Required cofactor for the serine protease function of NS3. May have membrane-destabilizing activity and form viroporins. In terms of biological role, displays three enzymatic activities: serine protease, NTPase and RNA helicase. NS3 serine protease, in association with NS2B, performs its autocleavage and cleaves the polyprotein at dibasic sites in the cytoplasm: C-prM, NS2A-NS2B, NS2B-NS3, NS3-NS4A, NS4A-2K and NS4B-NS5. NS3 RNA helicase binds RNA and unwinds dsRNA in the 3' to 5' direction. Also plays a role in virus assembly. Functionally, regulates the ATPase activity of the NS3 helicase activity. NS4A allows NS3 helicase to conserve energy during unwinding. Its function is as follows. Functions as a signal peptide for NS4B and is required for the interferon antagonism activity of the latter. Induces the formation of ER-derived membrane vesicles where the viral replication takes place. Inhibits interferon (IFN)-induced host STAT1 phosphorylation and nuclear translocation, thereby preventing the establishment of cellular antiviral state by blocking the IFN-alpha/beta pathway. In terms of biological role, replicates the viral (+) and (-) RNA genome, and performs the capping of genomes in the cytoplasm. NS5 methylates viral RNA cap at guanine N-7 and ribose 2'-O positions. Besides its role in RNA genome replication, also prevents the establishment of cellular antiviral state by blocking the interferon-alpha/beta (IFN-alpha/beta) signaling pathway. IFN-I induces binding of NS5 to host IFN-activated transcription factor STAT2, preventing its transcriptional activity. Host TRIM23 is the E3 ligase that interacts with and polyubiquitinates NS5 to promote its binding to STAT2 and trigger IFN-I signaling inhibition. This Yellow fever virus (isolate Ivory Coast/1999) (YFV) protein is Genome polyprotein.